A 305-amino-acid chain; its full sequence is tRNA pseudouridine synthase B (305 aa).

Residue Asp-39 is the Nucleophile of the active site.

It belongs to the pseudouridine synthase TruB family. Type 1 subfamily.

It carries out the reaction uridine(55) in tRNA = pseudouridine(55) in tRNA. Its function is as follows. Responsible for synthesis of pseudouridine from uracil-55 in the psi GC loop of transfer RNAs. This Staphylococcus aureus (strain bovine RF122 / ET3-1) protein is tRNA pseudouridine synthase B.